The sequence spans 1163 residues: Zinc finger protein 516 (1163 aa).

A compositionally biased stretch (basic and acidic residues) spans 1-13; it reads MDRNREAEMELRR. A disordered region spans residues 1-26; sequence MDRNREAEMELRRGPSPTRAGRGHEV. A mediates promoter DNA-binding and activation of transcription region spans residues 1-431; it reads MDRNREAEME…ATRGKVAEPA (431 aa). C2H2-type zinc fingers lie at residues 34-56, 62-84, 174-197, 200-223, 248-270, 276-298, and 335-357; these read HTCC…MRKH, YKCP…IRSH, VQCS…HQAH, FKCR…ERDH, FPCE…MKKH, HGCH…MKAH, and EVCA…NAIH. Positions 460–469 are enriched in basic and acidic residues; it reads SQEKRKREQD. 3 disordered regions span residues 460–512, 533–667, and 679–730; these read SQEK…TGQG, HSRV…QEQH, and HPKQ…APDL. Residues 496 to 507 show a composition bias toward low complexity; it reads RSAARPNRRAAA. The segment at 515–537 adopts a C2H2-type 8 zinc-finger fold; that stretch reads SECFECGKIFRTYHQMVLHSRVH. The span at 542–552 shows a compositional bias: basic and acidic residues; sequence RERDSDGDRAA. A compositionally biased stretch (polar residues) spans 561 to 572; it reads EGDSASQPSSPG. Residues 588–598 show a composition bias toward acidic residues; that stretch reads EAAEDSGEEGA. Residues 615–625 are compositionally biased toward polar residues; that stretch reads EVTSTELSSGD. The segment covering 626–641 has biased composition (basic and acidic residues); sequence QSHKMGDNASERDTGE. Lys643 participates in a covalent cross-link: Glycyl lysine isopeptide (Lys-Gly) (interchain with G-Cter in SUMO2). Basic and acidic residues predominate over residues 656–667; that stretch reads SSRETSRRQEQH. Lys681 is covalently cross-linked (Glycyl lysine isopeptide (Lys-Gly) (interchain with G-Cter in SUMO2)). A compositionally biased stretch (basic and acidic residues) spans 706–720; the sequence is PAEKLSDLHNKEHSG. Residues 760–783 form a C2H2-type 9; atypical zinc finger; sequence HPCPYCSHKTYYPEVLWMHKRIWH. The segment at 838-1007 is disordered; that stretch reads TQVPGGMPGS…PPREPPSKAA (170 aa). A compositionally biased stretch (low complexity) spans 840-857; the sequence is VPGGMPGSKSGSSPLGVV. Residues Lys1043 and Lys1062 each participate in a glycyl lysine isopeptide (Lys-Gly) (interchain with G-Cter in SUMO2) cross-link. A C2H2-type 10 zinc finger spans residues 1098–1120; the sequence is FVCIECGKSFHQPGHLRAHMRAH. The segment at 1126–1163 is disordered; sequence SDGPRGSEVHTTSADAPKQGRDHSNTGTVQTVPLRKGT.

Belongs to the krueppel C2H2-type zinc-finger protein family. In terms of assembly, interacts with PRDM16; the interaction is direct and may play a role in the transcription of brown adipose tissue-specific genes. Interacts with PWWP2B. Interacts with HDAC1; this interaction is enhanced in the presence of PWWP2B.

The protein localises to the nucleus. Its function is as follows. Transcriptional regulator that binds to the promoter and activates the transcription of genes promoting brown adipose tissue (BAT) differentiation. Among brown adipose tissue-specific genes, binds the proximal region of the promoter of the UCP1 gene to activate its transcription and thereby regulate thermogenesis. May also play a role in the cellular response to replication stress. The sequence is that of Zinc finger protein 516 from Homo sapiens (Human).